The following is a 230-amino-acid chain: 7-cyano-7-deazaguanine synthase (230 aa).

8–18 (LSGGMDSAVVT) lines the ATP pocket. Zn(2+) is bound by residues cysteine 186, cysteine 196, cysteine 199, and cysteine 202.

Belongs to the QueC family. Zn(2+) serves as cofactor.

The catalysed reaction is 7-carboxy-7-deazaguanine + NH4(+) + ATP = 7-cyano-7-deazaguanine + ADP + phosphate + H2O + H(+). It functions in the pathway purine metabolism; 7-cyano-7-deazaguanine biosynthesis. Functionally, catalyzes the ATP-dependent conversion of 7-carboxy-7-deazaguanine (CDG) to 7-cyano-7-deazaguanine (preQ(0)). This Xylella fastidiosa (strain M12) protein is 7-cyano-7-deazaguanine synthase.